The sequence spans 520 residues: Ribonuclease Y (520 aa).

A helical transmembrane segment spans residues 4–24; that stretch reads TMFTIISILLSLICLVVGYFV. A KH domain is found at 210–273; the sequence is TVSVVNLPND…ETARIALDKL (64 aa). Positions 336–429 constitute an HD domain; the sequence is VLKHSIEVAH…VAAADALSAA (94 aa).

Belongs to the RNase Y family.

It localises to the cell membrane. Functionally, endoribonuclease that initiates mRNA decay. The chain is Ribonuclease Y from Bacillus pumilus (strain SAFR-032).